Here is a 308-residue protein sequence, read N- to C-terminus: Ribosomal protein L11 methyltransferase (308 aa).

Positions 148, 169, 191, and 239 each coordinate S-adenosyl-L-methionine.

This sequence belongs to the methyltransferase superfamily. PrmA family.

The protein resides in the cytoplasm. It catalyses the reaction L-lysyl-[protein] + 3 S-adenosyl-L-methionine = N(6),N(6),N(6)-trimethyl-L-lysyl-[protein] + 3 S-adenosyl-L-homocysteine + 3 H(+). In terms of biological role, methylates ribosomal protein L11. The protein is Ribosomal protein L11 methyltransferase of Psychrobacter cryohalolentis (strain ATCC BAA-1226 / DSM 17306 / VKM B-2378 / K5).